We begin with the raw amino-acid sequence, 498 residues long: DEAD-box ATP-dependent RNA helicase 6 (498 aa).

Residues 1–109 form a disordered region; the sequence is MDPRARYPPG…WKAQLKLPPQ (109 aa). The span at 33 to 49 shows a compositional bias: basic residues; that stretch reads QHQHQHQQPPHPHHHQY. Low complexity-rich tracts occupy residues 50–61 and 75–86; these read VQRQPQPQQTPH and AAEAAGASEQKA. Residues 124-152 carry the Q motif motif; sequence NEFEDYFLKRELLMGIYEKGFERPSPIQE. The 171-residue stretch at 155 to 325 folds into the Helicase ATP-binding domain; that stretch reads IPIALTGSDI…DKYLPKPYVI (171 aa). 168–175 provides a ligand contact to ATP; sequence AKNGTGKT. The short motif at 273–276 is the DEAD box element; sequence DEAD. A Helicase C-terminal domain is found at 335–495; sequence GITQFYAFVE…PIPPQIDRAI (161 aa).

It belongs to the DEAD box helicase family. DDX6/DHH1 subfamily.

The protein resides in the cytoplasm. It localises to the P-body. The catalysed reaction is ATP + H2O = ADP + phosphate + H(+). ATP-dependent RNA helicase involved in mRNA turnover, and more specifically in mRNA decapping. The polypeptide is DEAD-box ATP-dependent RNA helicase 6 (Oryza sativa subsp. japonica (Rice)).